The chain runs to 385 residues: MKALQFGAGNIGRGFIGKTLSESGFSVIFSDVNQNIVDAINYNREYFVKIIGSNQNKTVNIKRVSAINSNDSNIKKIISSVDLITTAVGPTALEKIALIITQGIIFKIKNQFTKPLNIIACENKIKSSSFLKQVVLKNLPIKYHDYLNKYIGFIDCSIDTIIPSINNKDDLFLTVEEFKEWIVNINQFKGAVLKIVDMKFSNNLDAFIERKLFTLNTGHAIAAYLGLIKNYKTIQDAISDKKIRVIVRSAMEESGSVLIKRYNFNKNDHLDYIEKIFLRFENPFLSDKLERIGRNPLQKLRREDRLIKPFLGAFEYNLPYSNLAKGIAAAFYYHNKNDLESIELSSSIKKQGLESTIIKICDLPVNSKEVYSIILEYNLIKKIIR.

3-14 (ALQFGAGNIGRG) contacts NAD(+).

Belongs to the mannitol dehydrogenase family.

The enzyme catalyses D-mannitol 1-phosphate + NAD(+) = beta-D-fructose 6-phosphate + NADH + H(+). The protein is Mannitol-1-phosphate 5-dehydrogenase of Buchnera aphidicola subsp. Acyrthosiphon pisum (strain 5A).